We begin with the raw amino-acid sequence, 243 residues long: GrpE protein homolog, mitochondrial (243 aa).

The disordered stretch occupies residues 56–79; sequence KKEEPKDENDAAAAEEDANLTEEQ.

This sequence belongs to the GrpE family. Component of the PAM complex, at least composed of mtHsp70, MGE1, TIM44, PAM16, PAM17 and PAM18.

It localises to the mitochondrion matrix. Its function is as follows. Essential component of the PAM complex, a complex required for the translocation of transit peptide-containing proteins from the inner membrane into the mitochondrial matrix in an ATP-dependent manner. Seems to control the nucleotide-dependent binding of SSC1 to substrate proteins. This chain is GrpE protein homolog, mitochondrial (mge1), found in Kluyveromyces lactis (strain ATCC 8585 / CBS 2359 / DSM 70799 / NBRC 1267 / NRRL Y-1140 / WM37) (Yeast).